A 297-amino-acid polypeptide reads, in one-letter code: Nucleotide-binding protein Bphy_0322 (297 aa).

8 to 15 (GISGSGKS) contacts ATP. 57–60 (DARS) contributes to the GTP binding site.

Belongs to the RapZ-like family.

Displays ATPase and GTPase activities. The chain is Nucleotide-binding protein Bphy_0322 from Paraburkholderia phymatum (strain DSM 17167 / CIP 108236 / LMG 21445 / STM815) (Burkholderia phymatum).